The primary structure comprises 135 residues: Interleukin-4 (135 aa).

A signal peptide spans 1-24; the sequence is MGLTYQLIPVLVCLLVCTSHFAHG. 3 cysteine pairs are disulfide-bonded: Cys-27/Cys-135, Cys-48/Cys-85, and Cys-70/Cys-105. Asn-62 is a glycosylation site (N-linked (GlcNAc...) asparagine).

It belongs to the IL-4/IL-13 family.

The protein localises to the secreted. Functionally, participates in at least several B-cell activation processes as well as of other cell types. It is a costimulator of DNA-synthesis. It induces the expression of class II MHC molecules on resting B-cells. It enhances both secretion and cell surface expression of IgE and IgG1. It also regulates the expression of the low affinity Fc receptor for IgE (CD23) on both lymphocytes and monocytes. Positively regulates IL31RA expression in macrophages. Stimulates autophagy in dendritic cells by interfering with mTORC1 signaling and through the induction of RUFY4. The sequence is that of Interleukin-4 (IL4) from Boselaphus tragocamelus (Nilgai).